Reading from the N-terminus, the 558-residue chain is GPI mannosyltransferase 3 (558 aa).

4 helical membrane passes run Gly-53–Leu-73, Val-81–Phe-101, Ala-164–Leu-184, and Val-190–Leu-210. Asn-220 is a glycosylation site (N-linked (GlcNAc...) asparagine). The chain crosses the membrane as a helical span at residues Ile-234–Tyr-254. Asn-275 is a glycosylation site (N-linked (GlcNAc...) asparagine). The next 4 membrane-spanning stretches (helical) occupy residues Val-292 to Trp-312, Pro-323 to His-343, Phe-348 to Ser-368, and Ala-372 to Met-392.

Belongs to the glycosyltransferase 22 family. PIGB subfamily.

It localises to the endoplasmic reticulum membrane. It participates in glycolipid biosynthesis; glycosylphosphatidylinositol-anchor biosynthesis. In terms of biological role, mannosyltransferase involved in glycosylphosphatidylinositol-anchor biosynthesis. Transfers the third alpha-1,2-mannose to Man2-GlcN-acyl-PI during GPI precursor assembly. The sequence is that of GPI mannosyltransferase 3 (GPI10) from Trypanosoma brucei brucei.